Here is a 640-residue protein sequence, read N- to C-terminus: DNA mismatch repair protein MutL (640 aa).

A disordered region spans residues 343 to 389 (TKNTATDQRAENLEVKPDSKEKELQPKESQHPRLVACDLPSGKIMPP). Residues 350 to 373 (QRAENLEVKPDSKEKELQPKESQH) are compositionally biased toward basic and acidic residues.

This sequence belongs to the DNA mismatch repair MutL/HexB family.

Its function is as follows. This protein is involved in the repair of mismatches in DNA. It is required for dam-dependent methyl-directed DNA mismatch repair. May act as a 'molecular matchmaker', a protein that promotes the formation of a stable complex between two or more DNA-binding proteins in an ATP-dependent manner without itself being part of a final effector complex. This is DNA mismatch repair protein MutL from Desulforamulus reducens (strain ATCC BAA-1160 / DSM 100696 / MI-1) (Desulfotomaculum reducens).